The following is a 210-amino-acid chain: Dephospho-CoA kinase (210 aa).

Residues 4–202 (WVGLTGGIGS…AFYSGIFASK (199 aa)) form the DPCK domain. Residue 12–17 (GSGKSA) participates in ATP binding.

Belongs to the CoaE family.

It localises to the cytoplasm. It catalyses the reaction 3'-dephospho-CoA + ATP = ADP + CoA + H(+). The protein operates within cofactor biosynthesis; coenzyme A biosynthesis; CoA from (R)-pantothenate: step 5/5. Functionally, catalyzes the phosphorylation of the 3'-hydroxyl group of dephosphocoenzyme A to form coenzyme A. The protein is Dephospho-CoA kinase of Neisseria meningitidis serogroup A / serotype 4A (strain DSM 15465 / Z2491).